The primary structure comprises 365 residues: MAQNSLRLVEDKAVDKSKALDAALSQIERAFGKGSIMRLGANEQVVEIETVPTGSLGLDIALGVGGLPRGRIIEIYGPESSGKTTLALHTVAEAQKKGGICAFVDAEHALDPVYARKLGVDLENLLISQPDTGEQALEICDTLVRSGAIDVLVVDSVAALTPRAEIEGEMGDSLPGLQARLMSQALRKLTASISRSNTMVIFINQIRMKIGVMFGSPETTTGGNALKFYASVRLDIRRIGSVKDRDEVVGNQTRVKVVKNKLAPPFKVVEFDIMYGEGVSKTGELVDLGVKAGVVEKSGAWFSYNSQRLGQGRENAKLFLRDNPDTAREIELALRQNAGLIAEKFLENGGSEGGDDGFEDEAGAM.

77–84 (GPESSGKT) contributes to the ATP binding site.

It belongs to the RecA family.

It is found in the cytoplasm. Can catalyze the hydrolysis of ATP in the presence of single-stranded DNA, the ATP-dependent uptake of single-stranded DNA by duplex DNA, and the ATP-dependent hybridization of homologous single-stranded DNAs. It interacts with LexA causing its activation and leading to its autocatalytic cleavage. The protein is Protein RecA of Mesorhizobium japonicum (strain LMG 29417 / CECT 9101 / MAFF 303099) (Mesorhizobium loti (strain MAFF 303099)).